A 339-amino-acid polypeptide reads, in one-letter code: Dihydroorotate dehydrogenase (quinone) (339 aa).

Residues 62–66 (AGMDK) and T86 contribute to the FMN site. K66 is a substrate binding site. A substrate-binding site is contributed by 111–115 (NRMGF). 2 residues coordinate FMN: N139 and N172. N172 is a substrate binding site. The active-site Nucleophile is the S175. N177 serves as a coordination point for substrate. FMN contacts are provided by K217 and T245. 246-247 (NT) is a binding site for substrate. FMN-binding positions include G268, G297, and 318-319 (YS).

This sequence belongs to the dihydroorotate dehydrogenase family. Type 2 subfamily. As to quaternary structure, monomer. Requires FMN as cofactor.

Its subcellular location is the cell membrane. It carries out the reaction (S)-dihydroorotate + a quinone = orotate + a quinol. It participates in pyrimidine metabolism; UMP biosynthesis via de novo pathway; orotate from (S)-dihydroorotate (quinone route): step 1/1. In terms of biological role, catalyzes the conversion of dihydroorotate to orotate with quinone as electron acceptor. The sequence is that of Dihydroorotate dehydrogenase (quinone) from Shewanella baltica (strain OS223).